The following is a 120-amino-acid chain: Holo-[acyl-carrier-protein] synthase (120 aa).

Mg(2+) contacts are provided by Asp-8 and Glu-58.

This sequence belongs to the P-Pant transferase superfamily. AcpS family. It depends on Mg(2+) as a cofactor.

The protein resides in the cytoplasm. The enzyme catalyses apo-[ACP] + CoA = holo-[ACP] + adenosine 3',5'-bisphosphate + H(+). In terms of biological role, transfers the 4'-phosphopantetheine moiety from coenzyme A to a Ser of acyl-carrier-protein. The polypeptide is Holo-[acyl-carrier-protein] synthase (Streptococcus sanguinis (strain SK36)).